Consider the following 378-residue polypeptide: Ribosomal RNA large subunit methyltransferase G (378 aa).

It belongs to the methyltransferase superfamily. RlmG family.

Its subcellular location is the cytoplasm. It carries out the reaction guanosine(1835) in 23S rRNA + S-adenosyl-L-methionine = N(2)-methylguanosine(1835) in 23S rRNA + S-adenosyl-L-homocysteine + H(+). Its function is as follows. Specifically methylates the guanine in position 1835 (m2G1835) of 23S rRNA. This Escherichia coli O157:H7 protein is Ribosomal RNA large subunit methyltransferase G.